The sequence spans 142 residues: Transcription antitermination protein NusB (142 aa).

It belongs to the NusB family.

Involved in transcription antitermination. Required for transcription of ribosomal RNA (rRNA) genes. Binds specifically to the boxA antiterminator sequence of the ribosomal RNA (rrn) operons. The chain is Transcription antitermination protein NusB from Roseiflexus sp. (strain RS-1).